Reading from the N-terminus, the 879-residue chain is DNA mismatch repair protein MutS (879 aa).

629 to 636 (GPNMAGKS) lines the ATP pocket. A disordered region spans residues 824–845 (VGGQPQKELSEHKPHQPSLFAP).

Belongs to the DNA mismatch repair MutS family.

Its function is as follows. This protein is involved in the repair of mismatches in DNA. It is possible that it carries out the mismatch recognition step. This protein has a weak ATPase activity. The protein is DNA mismatch repair protein MutS of Desulfotalea psychrophila (strain LSv54 / DSM 12343).